A 242-amino-acid polypeptide reads, in one-letter code: Aquaporin (242 aa).

At 1-11 (MNTSTKLICQK) the chain is on the cytoplasmic side. The helical transmembrane segment at 12–32 (LFAEMLCSCIFGFAVYSAILN) threads the bilayer. The Extracellular segment spans residues 33–39 (TKASNSS). A helical transmembrane segment spans residues 40 to 60 (ISSTTVGLTVCFSSISLIYTF). The Cytoplasmic portion of the chain corresponds to 61 to 83 (CDHSVAHFNPAITIAAICTGKLD). Residues 69–71 (NPA) carry the NPA motif. A helical membrane pass occupies residues 84 to 104 (ILLGIGYVIAQLIGFILATLL). At 105 to 133 (TVVCFPYGYLKTMEFIASARISDDISTVN) the chain is on the extracellular side. Residues 134–154 (LFFTEFILSFILVFIAFEVGI) traverse the membrane as a helical segment. The Cytoplasmic segment spans residues 155 to 175 (NAIREPGVTLFVGIKQIDRSK). The chain crosses the membrane as a helical span at residues 176–196 (FAPLTIGITLGFLAFLASTTS). At 197-217 (GGAFNPGIVWGPAIMGGNFDD) the chain is on the extracellular side. Residues 201-203 (NPG) carry the NPG motif. A helical membrane pass occupies residues 218-238 (FVIYIISELSGGLLGAFIQVF). Topologically, residues 239–242 (LLFK) are cytoplasmic.

The protein belongs to the MIP/aquaporin (TC 1.A.8) family.

Its subcellular location is the cell membrane. Functionally, water channel required to facilitate the transport of water across membranes. Involved in osmotolerance. The sequence is that of Aquaporin (AQP) from Enterocytozoon bieneusi (strain H348) (Microsporidian parasite).